A 317-amino-acid polypeptide reads, in one-letter code: UAP56-interacting factor (317 aa).

An N-acetylmethionine modification is found at M1. The tract at residues 1–26 is disordered; sequence MNRFGTRLVGATATPPPPPKARSNEN. Position 14 is a phosphothreonine (T14). S23 is subject to Phosphoserine. The short motif at 26–44 is the UAP56-binding motif element; it reads NLDKIDMSLDDIIKLNRKE. 2 positions are modified to phosphoserine: S60 and S117. K139 participates in a covalent cross-link: Glycyl lysine isopeptide (Lys-Gly) (interchain with G-Cter in SUMO1). A Glycyl lysine isopeptide (Lys-Gly) (interchain with G-Cter in SUMO2) cross-link involves residue K260.

This sequence belongs to the UIF family. Interacts with DDX39B/UAP56 and NXF1; interaction with DDX39B/UAP56 and NXF1 are mutually exclusive. Interacts with SSRP1; required for its recruitment to mRNAs. Interacts with CHTOP.

Its subcellular location is the nucleus. The protein localises to the nucleoplasm. It is found in the nucleus speckle. Functionally, required for mRNA export from the nucleus to the cytoplasm. Acts as an adapter that uses the DDX39B/UAP56-NFX1 pathway to ensure efficient mRNA export and delivering to the nuclear pore. Associates with spliced and unspliced mRNAs simultaneously with ALYREF/THOC4. The chain is UAP56-interacting factor (Fyttd1) from Mus musculus (Mouse).